The chain runs to 358 residues: UDP-N-acetylglucosamine--N-acetylmuramyl-(pentapeptide) pyrophosphoryl-undecaprenol N-acetylglucosamine transferase (358 aa).

Residues 11–13 (TGG), Arg-163, Ser-191, Ile-245, and Gln-290 contribute to the UDP-N-acetyl-alpha-D-glucosamine site.

The protein belongs to the glycosyltransferase 28 family. MurG subfamily.

Its subcellular location is the cell inner membrane. The enzyme catalyses di-trans,octa-cis-undecaprenyl diphospho-N-acetyl-alpha-D-muramoyl-L-alanyl-D-glutamyl-meso-2,6-diaminopimeloyl-D-alanyl-D-alanine + UDP-N-acetyl-alpha-D-glucosamine = di-trans,octa-cis-undecaprenyl diphospho-[N-acetyl-alpha-D-glucosaminyl-(1-&gt;4)]-N-acetyl-alpha-D-muramoyl-L-alanyl-D-glutamyl-meso-2,6-diaminopimeloyl-D-alanyl-D-alanine + UDP + H(+). The protein operates within cell wall biogenesis; peptidoglycan biosynthesis. Functionally, cell wall formation. Catalyzes the transfer of a GlcNAc subunit on undecaprenyl-pyrophosphoryl-MurNAc-pentapeptide (lipid intermediate I) to form undecaprenyl-pyrophosphoryl-MurNAc-(pentapeptide)GlcNAc (lipid intermediate II). The chain is UDP-N-acetylglucosamine--N-acetylmuramyl-(pentapeptide) pyrophosphoryl-undecaprenol N-acetylglucosamine transferase from Herminiimonas arsenicoxydans.